Reading from the N-terminus, the 181-residue chain is Isopentenyl-diphosphate Delta-isomerase (181 aa).

Residues His-25 and His-32 each contribute to the Mn(2+) site. A Nudix hydrolase domain is found at 30-164 (PLHLAFSCWL…PWAFSPWMVM (135 aa)). Cys-67 is a catalytic residue. His-69 is a Mn(2+) binding site. Residue Glu-87 participates in Mg(2+) binding. Residues Glu-114 and Glu-116 each coordinate Mn(2+). Glu-116 is an active-site residue.

The protein belongs to the IPP isomerase type 1 family. Homodimer. Mg(2+) serves as cofactor. Requires Mn(2+) as cofactor.

It is found in the cytoplasm. The catalysed reaction is isopentenyl diphosphate = dimethylallyl diphosphate. The protein operates within isoprenoid biosynthesis; dimethylallyl diphosphate biosynthesis; dimethylallyl diphosphate from isopentenyl diphosphate: step 1/1. Catalyzes the 1,3-allylic rearrangement of the homoallylic substrate isopentenyl (IPP) to its highly electrophilic allylic isomer, dimethylallyl diphosphate (DMAPP). In Salmonella agona (strain SL483), this protein is Isopentenyl-diphosphate Delta-isomerase.